The sequence spans 136 residues: Basic phospholipase A2 Tgc-K49 (136 aa).

A signal peptide spans 1–15 (MRTLWIVAVLLVGEG). Intrachain disulfides connect cysteine 41–cysteine 130, cysteine 43–cysteine 59, cysteine 58–cysteine 110, cysteine 64–cysteine 136, cysteine 65–cysteine 103, cysteine 72–cysteine 96, and cysteine 90–cysteine 101. Histidine 62 is a catalytic residue. The active site involves aspartate 104.

The protein belongs to the phospholipase A2 family. Group II subfamily. K49 sub-subfamily. In terms of tissue distribution, expressed by the venom gland.

It is found in the secreted. The catalysed reaction is a 1,2-diacyl-sn-glycero-3-phosphocholine + H2O = a 1-acyl-sn-glycero-3-phosphocholine + a fatty acid + H(+). In terms of biological role, PLA2 catalyzes the calcium-dependent hydrolysis of the 2-acyl groups in 3-sn-phosphoglycerides. This Trimeresurus gracilis (Kikuchi habu) protein is Basic phospholipase A2 Tgc-K49.